A 369-amino-acid chain; its full sequence is Protein disulfide-isomerase erp38 (369 aa).

A signal peptide spans 1–18; the sequence is MVLLKSLVVASLAAAVAA. Thioredoxin domains lie at 19–130 and 131–251; these read KSAV…EKTG and VKAR…EKAG. Catalysis depends on nucleophile residues C50, C53, C170, and C173. Cystine bridges form between C50–C53 and C170–C173. Residues 366–369 carry the Prevents secretion from ER motif; the sequence is KEEL.

It belongs to the protein disulfide isomerase family.

Its subcellular location is the endoplasmic reticulum lumen. The catalysed reaction is Catalyzes the rearrangement of -S-S- bonds in proteins.. The protein is Protein disulfide-isomerase erp38 (erp38) of Neurospora crassa (strain ATCC 24698 / 74-OR23-1A / CBS 708.71 / DSM 1257 / FGSC 987).